The primary structure comprises 308 residues: GATA transcription factor 10 (308 aa).

The GATA-type zinc-finger motif lies at 214–268; the sequence is DGIVRICTHCETITTPQWRQGPSGPKTLCNACGVRFKSGRLVPEYRPASSPTFIP.

The protein belongs to the type IV zinc-finger family. Class A subfamily.

It localises to the nucleus. In terms of biological role, transcriptional activator that specifically binds 5'-GATA-3' or 5'-GAT-3' motifs within gene promoters. May be involved in the regulation of some light-responsive genes. The chain is GATA transcription factor 10 (GATA10) from Arabidopsis thaliana (Mouse-ear cress).